The chain runs to 476 residues: Glycogen synthase (476 aa).

Lysine 15 serves as a coordination point for ADP-alpha-D-glucose.

Belongs to the glycosyltransferase 1 family. Bacterial/plant glycogen synthase subfamily.

The catalysed reaction is [(1-&gt;4)-alpha-D-glucosyl](n) + ADP-alpha-D-glucose = [(1-&gt;4)-alpha-D-glucosyl](n+1) + ADP + H(+). Its pathway is glycan biosynthesis; glycogen biosynthesis. In terms of biological role, synthesizes alpha-1,4-glucan chains using ADP-glucose. The chain is Glycogen synthase from Haemophilus influenzae (strain 86-028NP).